An 81-amino-acid polypeptide reads, in one-letter code: MDPLTSAASVLSAALAIGLGSLGPGLGQGNAAAAAMEGLARQPEAEDKIRGNLLVSLAFMEALTIYGLVVALVLLFANPFA.

The next 2 helical transmembrane spans lie at 7-27 (AASV…PGLG) and 57-77 (LAFM…LLFA).

Belongs to the ATPase C chain family. In terms of assembly, F-type ATPases have 2 components, F(1) - the catalytic core - and F(0) - the membrane proton channel. F(1) has five subunits: alpha(3), beta(3), gamma(1), delta(1), epsilon(1). F(0) has four main subunits: a(1), b(1), b'(1) and c(10-14). The alpha and beta chains form an alternating ring which encloses part of the gamma chain. F(1) is attached to F(0) by a central stalk formed by the gamma and epsilon chains, while a peripheral stalk is formed by the delta, b and b' chains.

The protein resides in the cellular thylakoid membrane. In terms of biological role, f(1)F(0) ATP synthase produces ATP from ADP in the presence of a proton or sodium gradient. F-type ATPases consist of two structural domains, F(1) containing the extramembraneous catalytic core and F(0) containing the membrane proton channel, linked together by a central stalk and a peripheral stalk. During catalysis, ATP synthesis in the catalytic domain of F(1) is coupled via a rotary mechanism of the central stalk subunits to proton translocation. Its function is as follows. Key component of the F(0) channel; it plays a direct role in translocation across the membrane. A homomeric c-ring of between 10-14 subunits forms the central stalk rotor element with the F(1) delta and epsilon subunits. This is ATP synthase subunit c from Synechococcus sp. (strain JA-3-3Ab) (Cyanobacteria bacterium Yellowstone A-Prime).